Here is a 35-residue protein sequence, read N- to C-terminus: Trypsin inhibitor 1 (35 aa).

Intrachain disulfides connect cysteine 2–cysteine 19, cysteine 9–cysteine 23, and cysteine 18–cysteine 34.

Its function is as follows. Trypsin inhibitor. In Spinacia oleracea (Spinach), this protein is Trypsin inhibitor 1.